Reading from the N-terminus, the 116-residue chain is Protein Rev (116 aa).

Residues serine 5 and serine 8 each carry the phosphoserine; by host CK2 modification. The interval 18–26 (LIKFLYQSN) is homomultimerization. The segment at 23-48 (YQSNPPPSPEGTRQARRNRRRRWRAR) is disordered. Positions 34 to 50 (TRQARRNRRRRWRARQR) match the Nuclear localization signal and RNA-binding (RRE) motif. The span at 36 to 48 (QARRNRRRRWRAR) shows a compositional bias: basic residues. A Nuclear export signal and binding to XPO1 motif is present at residues 73 to 84 (LQLPPLERLNLN). Residues 90-116 (GTSGTQGVGSPQIPVEPPAVLESGTEE) form a disordered region. 2 positions are modified to phosphoserine; by host: serine 92 and serine 99.

The protein belongs to the HIV-1 REV protein family. As to quaternary structure, homomultimer; when bound to the RRE. Multimeric assembly is essential for activity and may involve XPO1. Binds to human KPNB1, XPO1, TNPO1, RANBP5 and IPO7. Interacts with the viral Integrase. Interacts with human KHDRBS1. Interacts with human NAP1; this interaction decreases Rev multimerization and stimulates its activity. Interacts with human DEAD-box helicases DDX3 and DDX24; these interactions may serve for viral RNA export to the cytoplasm and packaging, respectively. Interacts with human PSIP1; this interaction may inhibit HIV-1 DNA integration by promoting dissociation of the Integrase-LEDGF/p75 complex. Post-translationally, asymmetrically arginine dimethylated at one site by host PRMT6. Methylation impairs the RNA-binding activity and export of viral RNA from the nucleus to the cytoplasm. Phosphorylated by protein kinase CK2. Presence of, and maybe binding to the N-terminus of the regulatory beta subunit of CK2 is necessary for CK2-mediated Rev's phosphorylation.

The protein resides in the host nucleus. It localises to the host nucleolus. It is found in the host cytoplasm. Its function is as follows. Escorts unspliced or incompletely spliced viral pre-mRNAs (late transcripts) out of the nucleus of infected cells. These pre-mRNAs carry a recognition sequence called Rev responsive element (RRE) located in the env gene, that is not present in fully spliced viral mRNAs (early transcripts). This function is essential since most viral proteins are translated from unspliced or partially spliced pre-mRNAs which cannot exit the nucleus by the pathway used by fully processed cellular mRNAs. Rev itself is translated from a fully spliced mRNA that readily exits the nucleus. Rev's nuclear localization signal (NLS) binds directly to KPNB1/Importin beta-1 without previous binding to KPNA1/Importin alpha-1. KPNB1 binds to the GDP bound form of RAN (Ran-GDP) and targets Rev to the nucleus. In the nucleus, the conversion from Ran-GDP to Ran-GTP dissociates Rev from KPNB1 and allows Rev's binding to the RRE in viral pre-mRNAs. Rev multimerization on the RRE via cooperative assembly exposes its nuclear export signal (NES) to the surface. Rev can then form a complex with XPO1/CRM1 and Ran-GTP, leading to nuclear export of the complex. Conversion from Ran-GTP to Ran-GDP mediates dissociation of the Rev/RRE/XPO1/RAN complex, so that Rev can return to the nucleus for a subsequent round of export. Beside KPNB1, also seems to interact with TNPO1/Transportin-1, RANBP5/IPO5 and IPO7/RANBP7 for nuclear import. The nucleoporin-like HRB/RIP is an essential cofactor that probably indirectly interacts with Rev to release HIV RNAs from the perinuclear region to the cytoplasm. The chain is Protein Rev from Homo sapiens (Human).